A 476-amino-acid polypeptide reads, in one-letter code: Protein DETOXIFICATION 4 (476 aa).

The next 12 membrane-spanning stretches (helical) occupy residues 35–55, 66–86, 117–137, 154–174, 176–196, 208–228, 260–280, 289–309, 332–352, 370–390, 408–428, and 433–453; these read AVPM…SVMV, GVAL…FGLV, IPIC…LISL, LIPT…LLAQ, LVLP…AVCW, GAAL…SCYV, AAML…SGLL, VLSI…GVAA, LAGL…LFAF, VADL…TAVL, VVAY…SCEL, and LWCG…IVTA.

This sequence belongs to the multi antimicrobial extrusion (MATE) (TC 2.A.66.1) family.

Its subcellular location is the membrane. The protein is Protein DETOXIFICATION 4 of Arabidopsis thaliana (Mouse-ear cress).